Reading from the N-terminus, the 1047-residue chain is tRNA wybutosine-synthesizing protein 4 (1047 aa).

Residues Arg-69, Gly-95, Asp-122, 169–170 (DL), and Glu-196 contribute to the S-adenosyl-L-methionine site. The JmjC domain occupies 814–1003 (GRQYLRSISA…AAGRDVYGNR (190 aa)).

Belongs to the methyltransferase superfamily. LCMT family.

It catalyses the reaction 7-[(3S)-3-amino-3-carboxypropyl]wyosine(37) in tRNA(Phe) + S-adenosyl-L-methionine = 7-[(3S)-(3-amino-3-methoxycarbonyl)propyl]wyosine(37) in tRNA(Phe) + S-adenosyl-L-homocysteine. It carries out the reaction 7-[(3S)-(3-amino-3-methoxycarbonyl)propyl]wyosine(37) in tRNA(Phe) + S-adenosyl-L-methionine + CO2 = wybutosine(37) in tRNA(Phe) + S-adenosyl-L-homocysteine + 2 H(+). It participates in tRNA modification; wybutosine-tRNA(Phe) biosynthesis. Probable S-adenosyl-L-methionine-dependent methyltransferase that acts as a component of the wybutosine biosynthesis pathway. Wybutosine is a hyper modified guanosine with a tricyclic base found at the 3'-position adjacent to the anticodon of eukaryotic phenylalanine tRNA. May methylate the carboxyl group of leucine residues to form alpha-leucine ester residues. The sequence is that of tRNA wybutosine-synthesizing protein 4 (ppm2) from Aspergillus fumigatus (strain ATCC MYA-4609 / CBS 101355 / FGSC A1100 / Af293) (Neosartorya fumigata).